The chain runs to 495 residues: Protein FAM83F (495 aa).

A2 carries the N-acetylalanine modification. The DUF1669 stretch occupies residues 2–294 (AESQLSCLDE…LYAISEEVNL (293 aa)). Position 4 is a phosphoserine (S4). Disordered stretches follow at residues 341-362 (QQRE…GESA) and 384-495 (PISP…CVIS). Low complexity predominate over residues 447–458 (PAVPSSMASSPS). Phosphoserine is present on S477.

The protein belongs to the FAM83 family. As to quaternary structure, directly interacts (via DUF1669) with CSNK1A1 and CSNK1A1L.

The protein resides in the cell membrane. The chain is Protein FAM83F (Fam83f) from Mus musculus (Mouse).